The following is a 536-amino-acid chain: Proto-oncogene tyrosine-protein kinase Yrk (536 aa).

A lipid anchor (N-myristoyl glycine) is attached at Gly2. Residues Cys3 and Cys6 are each lipidated (S-palmitoyl cysteine). Residues 10–36 are disordered; that stretch reads ISGKGQGGSGTGTPAHPPSQYDPDPTQ. The SH3 domain maps to 81-142; sequence GGVTLFIALY…PSNYVAPVDS (62 aa). The region spanning 148–245 is the SH2 domain; sequence WYFGKIGRKD…GLCCRLAVPC (98 aa). The region spanning 270 to 523 is the Protein kinase domain; the sequence is LQLLQKLGNG…YLQSFLEDYF (254 aa). ATP-binding positions include 276 to 284 and Lys298; that span reads LGNGQFGEV. The Proton acceptor role is filled by Asp389. A Phosphotyrosine; by autocatalysis modification is found at Tyr419. Tyr530 carries the post-translational modification Phosphotyrosine.

This sequence belongs to the protein kinase superfamily. Tyr protein kinase family. SRC subfamily. Post-translationally, phosphorylated. There are elevated levels of this protein in neural and hematopoietic tissues.

It catalyses the reaction L-tyrosyl-[protein] + ATP = O-phospho-L-tyrosyl-[protein] + ADP + H(+). May participate in signaling pathways. The chain is Proto-oncogene tyrosine-protein kinase Yrk (YRK) from Gallus gallus (Chicken).